A 122-amino-acid polypeptide reads, in one-letter code: Glycine cleavage system H protein (122 aa).

In terms of domain architecture, Lipoyl-binding spans 19-101 (TATIGITKHA…EGNSWLYKIK (83 aa)). N6-lipoyllysine is present on K60.

This sequence belongs to the GcvH family. In terms of assembly, the glycine cleavage system is composed of four proteins: P, T, L and H. (R)-lipoate serves as cofactor.

Its function is as follows. The glycine cleavage system catalyzes the degradation of glycine. The H protein shuttles the methylamine group of glycine from the P protein to the T protein. This Dinoroseobacter shibae (strain DSM 16493 / NCIMB 14021 / DFL 12) protein is Glycine cleavage system H protein.